Here is a 419-residue protein sequence, read N- to C-terminus: Serine hydroxymethyltransferase (419 aa).

(6S)-5,6,7,8-tetrahydrofolate-binding positions include Leu121 and 125 to 127 (GHL). Position 229 is an N6-(pyridoxal phosphate)lysine (Lys229).

Belongs to the SHMT family. As to quaternary structure, homodimer. Pyridoxal 5'-phosphate serves as cofactor.

It is found in the cytoplasm. The enzyme catalyses (6R)-5,10-methylene-5,6,7,8-tetrahydrofolate + glycine + H2O = (6S)-5,6,7,8-tetrahydrofolate + L-serine. Its pathway is one-carbon metabolism; tetrahydrofolate interconversion. It participates in amino-acid biosynthesis; glycine biosynthesis; glycine from L-serine: step 1/1. Its function is as follows. Catalyzes the reversible interconversion of serine and glycine with tetrahydrofolate (THF) serving as the one-carbon carrier. This reaction serves as the major source of one-carbon groups required for the biosynthesis of purines, thymidylate, methionine, and other important biomolecules. Also exhibits THF-independent aldolase activity toward beta-hydroxyamino acids, producing glycine and aldehydes, via a retro-aldol mechanism. This chain is Serine hydroxymethyltransferase, found in Streptomyces griseus subsp. griseus (strain JCM 4626 / CBS 651.72 / NBRC 13350 / KCC S-0626 / ISP 5235).